A 127-amino-acid polypeptide reads, in one-letter code: Multifunctional methyltransferase subunit trm112 (127 aa).

The TRM112 domain occupies K2–P123.

The protein belongs to the TRM112 family. As to quaternary structure, heterodimer of mtq2-rmt-1/trm112, forming the eRF1 methyltransferase. Rmt-1/trm112 is necessary for the solubility and activity of the catalytic subunit mtq2. Interacts with trm11; required for full tRNA methyltransferase activity. Interacts with bud23; required for full rRNA methyltransferase activity.

It is found in the cytoplasm. It localises to the nucleus. In terms of biological role, acts as an activator of both rRNA/tRNA and protein methyltransferases. Together with methyltransferase mtq2, required for the methylation of eRF1 on 'Gln-182'. Together with methyltransferase trm11, required for the formation of 2-methylguanosine at position 10 (m2G10) in tRNA. Together with methyltransferase bud23, required for the formation of a 7-methylguanine in 18S rRNA. Involved in biogenesis of both 40S and 60S ribosomal subunits. The protein is Multifunctional methyltransferase subunit trm112 (rmt-1) of Neurospora crassa (strain ATCC 24698 / 74-OR23-1A / CBS 708.71 / DSM 1257 / FGSC 987).